A 423-amino-acid polypeptide reads, in one-letter code: Imidazolonepropionase (423 aa).

Fe(3+) is bound by residues His-87 and His-89. Residues His-87 and His-89 each contribute to the Zn(2+) site. Arg-96, Tyr-159, and His-192 together coordinate 4-imidazolone-5-propanoate. Tyr-159 lines the N-formimidoyl-L-glutamate pocket. A Fe(3+)-binding site is contributed by His-257. A Zn(2+)-binding site is contributed by His-257. Glu-260 contacts 4-imidazolone-5-propanoate. Asp-331 provides a ligand contact to Fe(3+). Position 331 (Asp-331) interacts with Zn(2+). 2 residues coordinate N-formimidoyl-L-glutamate: Asn-333 and Gly-335. Residue Ser-336 coordinates 4-imidazolone-5-propanoate.

The protein belongs to the metallo-dependent hydrolases superfamily. HutI family. It depends on Zn(2+) as a cofactor. Requires Fe(3+) as cofactor.

It is found in the cytoplasm. The catalysed reaction is 4-imidazolone-5-propanoate + H2O = N-formimidoyl-L-glutamate. It functions in the pathway amino-acid degradation; L-histidine degradation into L-glutamate; N-formimidoyl-L-glutamate from L-histidine: step 3/3. Catalyzes the hydrolytic cleavage of the carbon-nitrogen bond in imidazolone-5-propanoate to yield N-formimidoyl-L-glutamate. It is the third step in the universal histidine degradation pathway. This is Imidazolonepropionase from Porphyromonas gingivalis (strain ATCC BAA-308 / W83).